Reading from the N-terminus, the 333-residue chain is Adenosine deaminase (333 aa).

Residues His12 and His14 each coordinate Zn(2+). Substrate-binding residues include His14, Asp16, and Gly170. A Zn(2+)-binding site is contributed by His197. Residue Glu200 is the Proton donor of the active site. Asp278 is a Zn(2+) binding site. Residue Asp279 coordinates substrate.

It belongs to the metallo-dependent hydrolases superfamily. Adenosine and AMP deaminases family. Adenosine deaminase subfamily. The cofactor is Zn(2+).

The catalysed reaction is adenosine + H2O + H(+) = inosine + NH4(+). The enzyme catalyses 2'-deoxyadenosine + H2O + H(+) = 2'-deoxyinosine + NH4(+). In terms of biological role, catalyzes the hydrolytic deamination of adenosine and 2-deoxyadenosine. The chain is Adenosine deaminase from Shigella boydii serotype 4 (strain Sb227).